Reading from the N-terminus, the 572-residue chain is Phenylalanine--tRNA ligase beta subunit (572 aa).

The B5 domain maps to 285 to 363 (LSTTTKTVSH…RAFGFNELEP (79 aa)). Mg(2+)-binding residues include aspartate 341, aspartate 347, aspartate 350, and aspartate 351.

It belongs to the phenylalanyl-tRNA synthetase beta subunit family. Type 2 subfamily. In terms of assembly, tetramer of two alpha and two beta subunits. Mg(2+) serves as cofactor.

The protein localises to the cytoplasm. The enzyme catalyses tRNA(Phe) + L-phenylalanine + ATP = L-phenylalanyl-tRNA(Phe) + AMP + diphosphate + H(+). In Natronomonas pharaonis (strain ATCC 35678 / DSM 2160 / CIP 103997 / JCM 8858 / NBRC 14720 / NCIMB 2260 / Gabara) (Halobacterium pharaonis), this protein is Phenylalanine--tRNA ligase beta subunit.